Reading from the N-terminus, the 649-residue chain is Protein arginine N-methyltransferase 5 (649 aa).

Residues 10 to 300 (KSESRYCGVE…SPYLDYIAYI (291 aa)) form a TIM barrel region. An SAM-dependent MTase PRMT-type domain is found at 321 to 627 (LQSPLQPLMD…CGATKVWYEW (307 aa)). Residue Tyr337 participates in S-adenosyl-L-methionine binding. A protein is bound at residue Phe340. S-adenosyl-L-methionine is bound by residues 346–347 (KY), Glu405, and 433–434 (DM). A protein contacts are provided by Glu449 and Glu458. Active-site proton donor/acceptor residues include Glu449 and Glu458. Positions 479–649 (PSSYTSFIEP…SNGRSYWVGL (171 aa)) are beta barrel. Residues 491-507 (ASKLHNDIKAHKDIAHF) are dimerization.

Belongs to the class I-like SAM-binding methyltransferase superfamily. Protein arginine N-methyltransferase family.

It is found in the cytoplasm. The catalysed reaction is L-arginyl-[protein] + 2 S-adenosyl-L-methionine = N(omega),N(omega)'-dimethyl-L-arginyl-[protein] + 2 S-adenosyl-L-homocysteine + 2 H(+). Functionally, methylates arginine residues in proteins such as histone H4. This Oryza sativa subsp. indica (Rice) protein is Protein arginine N-methyltransferase 5 (PRMT5).